The primary structure comprises 79 residues: Sulfur carrier protein TusA (79 aa).

Cysteine 17 (cysteine persulfide intermediate) is an active-site residue.

The protein belongs to the sulfur carrier protein TusA family.

Its subcellular location is the cytoplasm. Functionally, sulfur carrier protein which probably makes part of a sulfur-relay system. The protein is Sulfur carrier protein TusA of Histophilus somni (strain 129Pt) (Haemophilus somnus).